A 475-amino-acid chain; its full sequence is Legumain (475 aa).

A signal peptide spans 1–15 (MVMMLVMLSLHGTAA). A propeptide spanning residues 16-35 (RLNRREWDSVIQLPTEPVDD) is cleaved from the precursor. Residue histidine 158 is part of the active site. Residue cysteine 200 is the Nucleophile of the active site. Cysteine 233 and cysteine 247 are oxidised to a cystine. An N-linked (GlcNAc...) asparagine glycan is attached at asparagine 300. Cystine bridges form between cysteine 411/cysteine 441 and cysteine 423/cysteine 458.

Belongs to the peptidase C13 family. In terms of assembly, homodimer.

The catalysed reaction is Hydrolysis of proteins and small molecule substrates at -Asn-|-Xaa- bonds.. With respect to regulation, repressed by various protease inhibitors including p-chloromercuribenzene sulfonic acid (PCMBS), N-ethylmaleimide, kininogen, elastatinal, cystatin EW and leupeptin. Functionally, asparaginyl endopeptidase able to cleave almost all peptide bonds on the carboxyl side of Asn residues, except at the NH2 terminus or second position or with N-glycosylated Asn. Responsible for the maturation (circular permutation) of concanavalin A from its precursor, by performing both cleavage and cleavage-coupled transpeptidation to form conA. This Canavalia ensiformis (Jack bean) protein is Legumain.